The following is a 54-amino-acid chain: Preprotein translocase subunit SecG (54 aa).

Over 1 to 31 the chain is Cytoplasmic; that stretch reads MSSGQNSGGLMSSAGLVRYFDAEDRNSIRID. The helical transmembrane segment at 32-53 threads the bilayer; sequence PKTIVAFGVLFGVGVLVLNALA. A topological domain (extracellular) is located at residue isoleucine 54.

This sequence belongs to the SEC61-beta family. In terms of assembly, component of the protein translocase complex. Heterotrimer consisting of alpha (SecY), beta (SecG) and gamma (SecE) subunits. Can form oligomers of the heterotrimer.

The protein localises to the cell membrane. Involved in protein export. The function of the beta subunit is unknown, but it may be involved in stabilization of the trimeric complex. The chain is Preprotein translocase subunit SecG from Haloquadratum walsbyi (strain DSM 16790 / HBSQ001).